A 599-amino-acid chain; its full sequence is Chaperone protein DnaK (599 aa).

Phosphothreonine; by autocatalysis is present on Thr-187. The disordered stretch occupies residues 575–599; sequence AQQAATENSKDSDTVEAEIVDDKAN.

This sequence belongs to the heat shock protein 70 family.

Functionally, acts as a chaperone. This is Chaperone protein DnaK from Mycoplasmopsis pulmonis (strain UAB CTIP) (Mycoplasma pulmonis).